We begin with the raw amino-acid sequence, 215 residues long: Ribonuclease T (215 aa).

An Exonuclease domain is found at 20–194 (VVIDVETAGF…YDTMQTAKLF (175 aa)). Asp-23, Glu-25, His-181, and Asp-186 together coordinate Mg(2+). His-181 functions as the Proton donor/acceptor in the catalytic mechanism.

The protein belongs to the RNase T family. In terms of assembly, homodimer. Mg(2+) is required as a cofactor.

In terms of biological role, trims short 3' overhangs of a variety of RNA species, leaving a one or two nucleotide 3' overhang. Responsible for the end-turnover of tRNA: specifically removes the terminal AMP residue from uncharged tRNA (tRNA-C-C-A). Also appears to be involved in tRNA biosynthesis. The sequence is that of Ribonuclease T from Yersinia enterocolitica serotype O:8 / biotype 1B (strain NCTC 13174 / 8081).